The chain runs to 357 residues: 3-dehydroquinate synthase (357 aa).

Residues Gly-99–Asp-103, Thr-123–Thr-124, Lys-135, Lys-144, and Phe-162–Thr-165 each bind NAD(+). Residues Glu-177, His-247, and His-261 each coordinate Zn(2+).

This sequence belongs to the sugar phosphate cyclases superfamily. Dehydroquinate synthase family. Co(2+) serves as cofactor. The cofactor is Zn(2+). It depends on NAD(+) as a cofactor.

It is found in the cytoplasm. It catalyses the reaction 7-phospho-2-dehydro-3-deoxy-D-arabino-heptonate = 3-dehydroquinate + phosphate. The protein operates within metabolic intermediate biosynthesis; chorismate biosynthesis; chorismate from D-erythrose 4-phosphate and phosphoenolpyruvate: step 2/7. Functionally, catalyzes the conversion of 3-deoxy-D-arabino-heptulosonate 7-phosphate (DAHP) to dehydroquinate (DHQ). In Macrococcus caseolyticus (strain JCSC5402) (Macrococcoides caseolyticum), this protein is 3-dehydroquinate synthase.